Consider the following 345-residue polypeptide: Tryptophan--tRNA ligase (345 aa).

Residues 22–24 (QPS) and 30–31 (GN) contribute to the ATP site. The 'HIGH' region signature appears at 23-31 (PSGELTIGN). Asp146 provides a ligand contact to L-tryptophan. ATP-binding positions include 158-160 (GID), Val197, and 206-210 (KMSKS). The 'KMSKS' region signature appears at 206–210 (KMSKS).

The protein belongs to the class-I aminoacyl-tRNA synthetase family. In terms of assembly, homodimer.

The protein localises to the cytoplasm. The enzyme catalyses tRNA(Trp) + L-tryptophan + ATP = L-tryptophyl-tRNA(Trp) + AMP + diphosphate + H(+). Catalyzes the attachment of tryptophan to tRNA(Trp). The polypeptide is Tryptophan--tRNA ligase (Photorhabdus laumondii subsp. laumondii (strain DSM 15139 / CIP 105565 / TT01) (Photorhabdus luminescens subsp. laumondii)).